We begin with the raw amino-acid sequence, 161 residues long: Allophycocyanin alpha chain (161 aa).

Position 71 is an N4-methylasparagine (Asn71). Cys81 contacts (2R,3E)-phycocyanobilin.

It belongs to the phycobiliprotein family. Heterodimer of an alpha and a beta chain. Contains one covalently linked phycocyanobilin chromophore.

Its subcellular location is the cellular thylakoid membrane. Functionally, light-harvesting photosynthetic bile pigment-protein from the phycobiliprotein complex. Allophycocyanin has a maximum absorption at approximately 650 nanometers. The protein is Allophycocyanin alpha chain (apcA) of Synechocystis sp. (strain PCC 6714) (Aphanocapsa sp. (strain PCC 6714)).